A 100-amino-acid polypeptide reads, in one-letter code: MAAALALVAGVLSGAVLPLWSALPQYKKKITDRCFHHSECYSGCCLMDLDSGGAFCAPRARITMICLPQTKGATNIICPCRMGLTCISKDLMCSRRCHMI.

Positions 1–21 (MAAALALVAGVLSGAVLPLWS) are cleaved as a signal peptide. Disulfide bonds link cysteine 34-cysteine 45, cysteine 40-cysteine 56, cysteine 44-cysteine 78, cysteine 66-cysteine 86, and cysteine 80-cysteine 97.

The protein belongs to the colipase family.

Its subcellular location is the secreted. In Homo sapiens (Human), this protein is Colipase-like protein 2 (CLPSL2).